Reading from the N-terminus, the 306-residue chain is MARYRVHVNDPLDKEATQLLMNKEELEVTSEHLEKDELMKIIPEVDVLVVRSATKVTADIIEAGKNLKIIARAGIGLDNIDVQKAKEKGIKVLNTPGASAPSVAELAMGLMLACARHIARATVSLKEGKWEKKALKGKELLGKTLGLIGFGNIGQEVAKRALAFGMKIIAYDPAKPETDLPVEYVDLDTLFKESDFISLHVPLTESTRHIINRESIAKMKDGVIIVNTARGGTIDEEALYEEVVSGKVYAAGLDVFEVEPPTDEIRRKLLSLDNVVATPHIGASTAEAQRRVGIELVEKIFKELGI.

NAD(+) contacts are provided by residues Asn-152 to Ile-153, Asp-172, Thr-228 to Arg-230, and Asp-254. Arg-230 is a catalytic residue. Residue Glu-259 is part of the active site. The Proton donor role is filled by His-280. His-280–Ala-283 is a binding site for NAD(+).

Belongs to the D-isomer specific 2-hydroxyacid dehydrogenase family.

It carries out the reaction (R)-glycerate + NAD(+) = 3-hydroxypyruvate + NADH + H(+). It catalyses the reaction (R)-glycerate + NADP(+) = 3-hydroxypyruvate + NADPH + H(+). Its function is as follows. Involved in the degradation of L-serine via 3-hydroxypyruvate. Catalyzes the non-reversible reduction of 3-hydroxypyruvate to yield D-glycerate. In Thermotoga maritima (strain ATCC 43589 / DSM 3109 / JCM 10099 / NBRC 100826 / MSB8), this protein is Hydroxypyruvate reductase.